The sequence spans 731 residues: Catalase-peroxidase 2 (731 aa).

The segment covering 1–10 (MAETPNSDMS) has biased composition (polar residues). Residues 1–26 (MAETPNSDMSGATGGRSKRPKSNQDW) form a disordered region. Residues 95–218 (WHSAGTYRTA…LGASVMGLIY (124 aa)) constitute a cross-link (tryptophyl-tyrosyl-methioninium (Trp-Tyr) (with M-244)). His-96 serves as the catalytic Proton acceptor. The tryptophyl-tyrosyl-methioninium (Tyr-Met) (with W-95) cross-link spans 218–244 (YVNPEGPDGNPDPEASAKNIRQTFDRM). His-259 is a binding site for heme b.

In terms of assembly, homodimer. It depends on heme b as a cofactor. Post-translationally, formation of the three residue Trp-Tyr-Met cross-link is important for the catalase, but not the peroxidase activity of the enzyme.

The catalysed reaction is H2O2 + AH2 = A + 2 H2O. It carries out the reaction 2 H2O2 = O2 + 2 H2O. Its function is as follows. Bifunctional enzyme with both catalase and broad-spectrum peroxidase activity. The chain is Catalase-peroxidase 2 from Haloarcula marismortui (strain ATCC 43049 / DSM 3752 / JCM 8966 / VKM B-1809) (Halobacterium marismortui).